The sequence spans 320 residues: MTPRHLLAAGDLSRDDAIAILDDADRFAQALVGREVKKLPTLRGRTVVTMFYENSTRTRVSFEVAGKWMSADVINVSASGSSVSKGESLRDTALTLRAAGADALIIRHPASGAARLLADWTAGQSDGGPSVINAGDGTHEHPTQALLDALTIRQRLGGIEGRRVVIVGDILHSRVARSNVMLLHTLGAEVVLVAPPTLLPVGVADWPVTVSHDLDAELPAADAVLMLRVQAERMNGGFFPSVREYSTLYGLSDRRQAMLGGHAVVLHPGPMLRGMEIASSVADSSQSAVLQQVSNGVHIRMAVLFHVLVGLESAGEEGAA.

Residues Arg57 and Thr58 each contribute to the carbamoyl phosphate site. Lys85 provides a ligand contact to L-aspartate. Residues Arg107, His141, and Gln144 each contribute to the carbamoyl phosphate site. Residues Arg174 and Arg228 each coordinate L-aspartate. Residues Gly269 and Pro270 each contribute to the carbamoyl phosphate site.

It belongs to the aspartate/ornithine carbamoyltransferase superfamily. ATCase family. As to quaternary structure, heterododecamer (2C3:3R2) of six catalytic PyrB chains organized as two trimers (C3), and six regulatory PyrI chains organized as three dimers (R2).

The enzyme catalyses carbamoyl phosphate + L-aspartate = N-carbamoyl-L-aspartate + phosphate + H(+). The protein operates within pyrimidine metabolism; UMP biosynthesis via de novo pathway; (S)-dihydroorotate from bicarbonate: step 2/3. Its function is as follows. Catalyzes the condensation of carbamoyl phosphate and aspartate to form carbamoyl aspartate and inorganic phosphate, the committed step in the de novo pyrimidine nucleotide biosynthesis pathway. The chain is Aspartate carbamoyltransferase catalytic subunit from Mycobacterium marinum (strain ATCC BAA-535 / M).